The following is a 229-amino-acid chain: Capsid protein (229 aa).

M1 is modified (N-acetylmethionine; by host). A compositionally biased stretch (gly residues) spans 1-10; it reads MAQNGTGGGS. Residues 1-28 form a disordered region; the sequence is MAQNGTGGGSRRPRRGRRNNNNNNSTAR. C64 and C106 are joined by a disulfide.

It belongs to the cucumovirus capsid protein family.

The protein resides in the virion. Its function is as follows. Capsid protein. Probably binds RNA and plays a role in packaging. The protein is Capsid protein of Canna (Florist's daisy).